Here is a 957-residue protein sequence, read N- to C-terminus: Glycine dehydrogenase (decarboxylating) (957 aa).

Lys-702 is modified (N6-(pyridoxal phosphate)lysine).

It belongs to the GcvP family. As to quaternary structure, the glycine cleavage system is composed of four proteins: P, T, L and H. Requires pyridoxal 5'-phosphate as cofactor.

It carries out the reaction N(6)-[(R)-lipoyl]-L-lysyl-[glycine-cleavage complex H protein] + glycine + H(+) = N(6)-[(R)-S(8)-aminomethyldihydrolipoyl]-L-lysyl-[glycine-cleavage complex H protein] + CO2. Its function is as follows. The glycine cleavage system catalyzes the degradation of glycine. The P protein binds the alpha-amino group of glycine through its pyridoxal phosphate cofactor; CO(2) is released and the remaining methylamine moiety is then transferred to the lipoamide cofactor of the H protein. The sequence is that of Glycine dehydrogenase (decarboxylating) from Bradyrhizobium sp. (strain BTAi1 / ATCC BAA-1182).